Reading from the N-terminus, the 216-residue chain is Redox-sensing transcriptional repressor Rex (216 aa).

Residues 17 to 56 constitute a DNA-binding region (H-T-H motif); that stretch reads IYFRYLTFLHDAGTDRISSAELSDAIKFDAATIRRDFSYF. 91-96 contributes to the NAD(+) binding site; sequence GAGNLG.

The protein belongs to the transcriptional regulatory Rex family. In terms of assembly, homodimer.

It localises to the cytoplasm. Its function is as follows. Modulates transcription in response to changes in cellular NADH/NAD(+) redox state. This Leuconostoc citreum (strain KM20) protein is Redox-sensing transcriptional repressor Rex.